We begin with the raw amino-acid sequence, 537 residues long: Extracellular exo-inulinase inuE (537 aa).

The N-terminal stretch at 1-19 (MARLLKAVTVCALAGIAHA) is a signal peptide. Aspartate 41 is a catalytic residue. N-linked (GlcNAc...) asparagine glycosylation is found at asparagine 49, asparagine 67, asparagine 112, asparagine 300, asparagine 363, asparagine 398, asparagine 430, and asparagine 531.

This sequence belongs to the glycosyl hydrolase 32 family.

The protein resides in the secreted. The catalysed reaction is Hydrolysis of terminal, non-reducing (2-&gt;1)- and (2-&gt;6)-linked beta-D-fructofuranose residues in fructans.. Its activity is regulated as follows. The catalytic activity is increased by manganese cathions, but strongly inhibited by other metal ions such as copper, aluminum, silver, iron, nickel, zinc and magnesium cathions. Functionally, exo-inulinase involved in utilization of the plant storage polymer inulin, consisting of fructooligosaccharides with a degree of polymerization (DP) value from 2 to 60. Splits off terminal fructose units successively from the non-reducing end of the inulin molecule, and also hydrolyze sucrose and raffinose. In Aspergillus ficuum, this protein is Extracellular exo-inulinase inuE (exoI).